The following is a 166-amino-acid chain: Phosphopantetheine adenylyltransferase (166 aa).

Ser11 contributes to the substrate binding site. ATP contacts are provided by residues 11–12 (SF) and His19. Lys43, Val80, and Arg94 together coordinate substrate. Residues 95-97 (GLR), Glu105, and 130-136 (VRTITAT) each bind ATP.

Belongs to the bacterial CoaD family. Homohexamer. Mg(2+) is required as a cofactor.

It is found in the cytoplasm. It carries out the reaction (R)-4'-phosphopantetheine + ATP + H(+) = 3'-dephospho-CoA + diphosphate. It functions in the pathway cofactor biosynthesis; coenzyme A biosynthesis; CoA from (R)-pantothenate: step 4/5. In terms of biological role, reversibly transfers an adenylyl group from ATP to 4'-phosphopantetheine, yielding dephospho-CoA (dPCoA) and pyrophosphate. This chain is Phosphopantetheine adenylyltransferase, found in Mesorhizobium japonicum (strain LMG 29417 / CECT 9101 / MAFF 303099) (Mesorhizobium loti (strain MAFF 303099)).